The chain runs to 428 residues: CinA-like protein (428 aa).

Belongs to the CinA family.

The protein is CinA-like protein of Chlorobium phaeovibrioides (strain DSM 265 / 1930) (Prosthecochloris vibrioformis (strain DSM 265)).